A 642-amino-acid polypeptide reads, in one-letter code: Probable Xaa-Pro aminopeptidase P (642 aa).

Asp-439, Asp-450, Glu-548, and Glu-562 together coordinate Mn(2+).

The protein belongs to the peptidase M24B family. The cofactor is Mn(2+).

It catalyses the reaction Release of any N-terminal amino acid, including proline, that is linked to proline, even from a dipeptide or tripeptide.. Its function is as follows. Catalyzes the removal of a penultimate prolyl residue from the N-termini of peptides. The polypeptide is Probable Xaa-Pro aminopeptidase P (AMPP) (Laccaria bicolor (strain S238N-H82 / ATCC MYA-4686) (Bicoloured deceiver)).